A 208-amino-acid polypeptide reads, in one-letter code: Imidazole glycerol phosphate synthase subunit HisH (208 aa).

A Glutamine amidotransferase type-1 domain is found at 1 to 206 (MIVIIDYDTG…KEVTYSCKSS (206 aa)). The active-site Nucleophile is C79. Active-site residues include H181 and E183.

In terms of assembly, heterodimer of HisH and HisF.

The protein localises to the cytoplasm. The catalysed reaction is 5-[(5-phospho-1-deoxy-D-ribulos-1-ylimino)methylamino]-1-(5-phospho-beta-D-ribosyl)imidazole-4-carboxamide + L-glutamine = D-erythro-1-(imidazol-4-yl)glycerol 3-phosphate + 5-amino-1-(5-phospho-beta-D-ribosyl)imidazole-4-carboxamide + L-glutamate + H(+). It catalyses the reaction L-glutamine + H2O = L-glutamate + NH4(+). Its pathway is amino-acid biosynthesis; L-histidine biosynthesis; L-histidine from 5-phospho-alpha-D-ribose 1-diphosphate: step 5/9. Functionally, IGPS catalyzes the conversion of PRFAR and glutamine to IGP, AICAR and glutamate. The HisH subunit catalyzes the hydrolysis of glutamine to glutamate and ammonia as part of the synthesis of IGP and AICAR. The resulting ammonia molecule is channeled to the active site of HisF. This is Imidazole glycerol phosphate synthase subunit HisH from Listeria monocytogenes serotype 4a (strain HCC23).